The primary structure comprises 176 residues: Large ribosomal subunit protein uL6 (176 aa).

The protein belongs to the universal ribosomal protein uL6 family. In terms of assembly, part of the 50S ribosomal subunit.

Functionally, this protein binds to the 23S rRNA, and is important in its secondary structure. It is located near the subunit interface in the base of the L7/L12 stalk, and near the tRNA binding site of the peptidyltransferase center. This is Large ribosomal subunit protein uL6 from Burkholderia thailandensis (strain ATCC 700388 / DSM 13276 / CCUG 48851 / CIP 106301 / E264).